We begin with the raw amino-acid sequence, 455 residues long: UDP-N-acetylmuramoylalanine--D-glutamate ligase (455 aa).

119 to 125 (GTNGKTT) is a binding site for ATP.

This sequence belongs to the MurCDEF family.

It localises to the cytoplasm. The enzyme catalyses UDP-N-acetyl-alpha-D-muramoyl-L-alanine + D-glutamate + ATP = UDP-N-acetyl-alpha-D-muramoyl-L-alanyl-D-glutamate + ADP + phosphate + H(+). It functions in the pathway cell wall biogenesis; peptidoglycan biosynthesis. Its function is as follows. Cell wall formation. Catalyzes the addition of glutamate to the nucleotide precursor UDP-N-acetylmuramoyl-L-alanine (UMA). In Listeria monocytogenes serovar 1/2a (strain ATCC BAA-679 / EGD-e), this protein is UDP-N-acetylmuramoylalanine--D-glutamate ligase.